Consider the following 1802-residue polypeptide: U3 small nucleolar RNA-associated protein 10 (1802 aa).

The stretch at 581-618 is one HEAT 1 repeat; it reads MDLQALLPFVLVTLADPSERVRREAAGILTIIGSLHKN. The next 2 helical transmembrane spans lie at 946 to 966 and 1002 to 1022; these read VQSG…AIVN and ALLL…HSVM. HEAT repeat units follow at residues 1046 to 1083, 1253 to 1290, 1297 to 1335, and 1758 to 1795; these read QTID…AFEH, LSLV…QNPE, TRML…KYGK, and ALLP…VLGE.

This sequence belongs to the HEATR1/UTP10 family. In terms of assembly, component of the ribosomal small subunit (SSU) processome.

The protein localises to the nucleus. It is found in the nucleolus. It localises to the membrane. Its function is as follows. Involved in nucleolar processing of pre-18S ribosomal RNA. Involved in ribosome biosynthesis. The polypeptide is U3 small nucleolar RNA-associated protein 10 (Aspergillus oryzae (strain ATCC 42149 / RIB 40) (Yellow koji mold)).